A 181-amino-acid chain; its full sequence is Large ribosomal subunit protein uL6m (181 aa).

It belongs to the universal ribosomal protein uL6 family.

The protein resides in the mitochondrion. The protein is Large ribosomal subunit protein uL6m (RPL6) of Acanthamoeba castellanii (Amoeba).